We begin with the raw amino-acid sequence, 331 residues long: tRNA-cytidine(32) 2-sulfurtransferase (331 aa).

Residues 1 to 31 (MNAPHMNDTTADAATLDATAAPAGRPALTRR) are disordered. The segment covering 8-23 (DTTADAATLDATAAPA) has biased composition (low complexity). The PP-loop motif motif lies at 71-76 (SGGKDS). The [4Fe-4S] cluster site is built by C146, C149, and C237.

Belongs to the TtcA family. As to quaternary structure, homodimer. Mg(2+) serves as cofactor. Requires [4Fe-4S] cluster as cofactor.

It localises to the cytoplasm. The enzyme catalyses cytidine(32) in tRNA + S-sulfanyl-L-cysteinyl-[cysteine desulfurase] + AH2 + ATP = 2-thiocytidine(32) in tRNA + L-cysteinyl-[cysteine desulfurase] + A + AMP + diphosphate + H(+). The protein operates within tRNA modification. In terms of biological role, catalyzes the ATP-dependent 2-thiolation of cytidine in position 32 of tRNA, to form 2-thiocytidine (s(2)C32). The sulfur atoms are provided by the cysteine/cysteine desulfurase (IscS) system. The chain is tRNA-cytidine(32) 2-sulfurtransferase from Burkholderia lata (strain ATCC 17760 / DSM 23089 / LMG 22485 / NCIMB 9086 / R18194 / 383).